Here is a 328-residue protein sequence, read N- to C-terminus: MQDDTSSEQNPTHCSAINSSVPLVQGALPTLTLSGKIRVTVTFFLFLVSTTLNASFLLKLQKWTQKKEKGKKLSRMKVLLKHLTLANLLETLIVMPLDGMWNITVQWYAGELLCKILSYLKLFSMYAPAFMMVVISLDRSMAITRPLPVQSNRKLEQSMTGLAWGLSSVLAGPQLYIFKMIHLENGPGQTEVFSQCVTHCSFPQWWHQAFYNFFTFICLFIIPLLIMLICNAKIIFTLTQVLQQDSNKLQLNQSKNNIPRARLRTLKMTVAFAASFIVCWTPYYVLGLWYWFDPGMLHRMSEPVNHFFFLFAFLNPCFDPLIYGYFSL.

At 1–38 (MQDDTSSEQNPTHCSAINSSVPLVQGALPTLTLSGKIR) the chain is on the extracellular side. N-linked (GlcNAc...) asparagine glycosylation occurs at N18. The helical transmembrane segment at 39–59 (VTVTFFLFLVSTTLNASFLLK) threads the bilayer. Topologically, residues 60-84 (LQKWTQKKEKGKKLSRMKVLLKHLT) are cytoplasmic. The chain crosses the membrane as a helical span at residues 85 to 105 (LANLLETLIVMPLDGMWNITV). Residues 106 to 115 (QWYAGELLCK) are Extracellular-facing. C114 and C196 are oxidised to a cystine. The chain crosses the membrane as a helical span at residues 116–136 (ILSYLKLFSMYAPAFMMVVIS). Residues 137 to 160 (LDRSMAITRPLPVQSNRKLEQSMT) lie on the Cytoplasmic side of the membrane. The helical transmembrane segment at 161–181 (GLAWGLSSVLAGPQLYIFKMI) threads the bilayer. Topologically, residues 182–208 (HLENGPGQTEVFSQCVTHCSFPQWWHQ) are extracellular. Residues 209–229 (AFYNFFTFICLFIIPLLIMLI) form a helical membrane-spanning segment. Residues 230-271 (CNAKIIFTLTQVLQQDSNKLQLNQSKNNIPRARLRTLKMTVA) are Cytoplasmic-facing. The chain crosses the membrane as a helical span at residues 272 to 292 (FAASFIVCWTPYYVLGLWYWF). Residues 293–306 (DPGMLHRMSEPVNH) lie on the Extracellular side of the membrane. The chain crosses the membrane as a helical span at residues 307-327 (FFFLFAFLNPCFDPLIYGYFS). L328 is a topological domain (cytoplasmic).

This sequence belongs to the G-protein coupled receptor 1 family.

The protein resides in the cell membrane. Functionally, receptor for gonadotropin releasing hormone (GnRH) that mediates the action of GnRH to stimulate the secretion of the gonadotropic hormones luteinizing hormone (LH) and follicle-stimulating hormone (FSH). This receptor mediates its action by association with G-proteins that activate a phosphatidylinositol-calcium second messenger system. The protein is Gonadotropin-releasing hormone receptor (GNRHR) of Cavia porcellus (Guinea pig).